We begin with the raw amino-acid sequence, 184 residues long: ATP synthase subunit b, chloroplastic (184 aa).

The chain crosses the membrane as a helical span at residues 26–48 (ILATNLINLSVVLGVLIFFGKGV).

It belongs to the ATPase B chain family. As to quaternary structure, F-type ATPases have 2 components, F(1) - the catalytic core - and F(0) - the membrane proton channel. F(1) has five subunits: alpha(3), beta(3), gamma(1), delta(1), epsilon(1). F(0) has four main subunits: a(1), b(1), b'(1) and c(10-14). The alpha and beta chains form an alternating ring which encloses part of the gamma chain. F(1) is attached to F(0) by a central stalk formed by the gamma and epsilon chains, while a peripheral stalk is formed by the delta, b and b' chains.

Its subcellular location is the plastid. The protein localises to the chloroplast thylakoid membrane. Functionally, f(1)F(0) ATP synthase produces ATP from ADP in the presence of a proton or sodium gradient. F-type ATPases consist of two structural domains, F(1) containing the extramembraneous catalytic core and F(0) containing the membrane proton channel, linked together by a central stalk and a peripheral stalk. During catalysis, ATP synthesis in the catalytic domain of F(1) is coupled via a rotary mechanism of the central stalk subunits to proton translocation. In terms of biological role, component of the F(0) channel, it forms part of the peripheral stalk, linking F(1) to F(0). This chain is ATP synthase subunit b, chloroplastic, found in Acorus calamus (Sweet flag).